The primary structure comprises 932 residues: DNA mismatch repair protein MutS (932 aa).

620–627 lines the ATP pocket; sequence GPNMAGKS.

This sequence belongs to the DNA mismatch repair MutS family.

This protein is involved in the repair of mismatches in DNA. It is possible that it carries out the mismatch recognition step. This protein has a weak ATPase activity. In Lachnoclostridium phytofermentans (strain ATCC 700394 / DSM 18823 / ISDg) (Clostridium phytofermentans), this protein is DNA mismatch repair protein MutS.